We begin with the raw amino-acid sequence, 65 residues long: MPKMKTKSSAKKRFKVLGNGGVKRAHAFKRHILTKKTTKNKRQLRGTSMVNDRDLASVAKMLPYA.

This sequence belongs to the bacterial ribosomal protein bL35 family.

The polypeptide is Large ribosomal subunit protein bL35 (Neisseria meningitidis serogroup A / serotype 4A (strain DSM 15465 / Z2491)).